Reading from the N-terminus, the 163-residue chain is Nucleotide-binding protein DvMF_3058 (163 aa).

It belongs to the YajQ family.

Nucleotide-binding protein. The sequence is that of Nucleotide-binding protein DvMF_3058 from Nitratidesulfovibrio vulgaris (strain DSM 19637 / Miyazaki F) (Desulfovibrio vulgaris).